Reading from the N-terminus, the 173-residue chain is Co-chaperone protein HscB (173 aa).

In terms of domain architecture, J spans 2–74 (DYFTLFGLPA…LKRAEYMLSQ (73 aa)).

The protein belongs to the HscB family. As to quaternary structure, interacts with HscA and stimulates its ATPase activity. Interacts with IscU.

Its function is as follows. Co-chaperone involved in the maturation of iron-sulfur cluster-containing proteins. Seems to help targeting proteins to be folded toward HscA. The chain is Co-chaperone protein HscB from Xenorhabdus nematophila (strain ATCC 19061 / DSM 3370 / CCUG 14189 / LMG 1036 / NCIMB 9965 / AN6).